A 216-amino-acid polypeptide reads, in one-letter code: Redox-sensing transcriptional repressor Rex (216 aa).

Residues 16-55 (VYYRYLNVLLNANKHRVSSTELSEAVQVDSATIRRDFSYF) constitute a DNA-binding region (H-T-H motif). 90–95 (GVGSLG) serves as a coordination point for NAD(+).

Belongs to the transcriptional regulatory Rex family. In terms of assembly, homodimer.

The protein localises to the cytoplasm. Functionally, modulates transcription in response to changes in cellular NADH/NAD(+) redox state. This Limosilactobacillus fermentum (strain NBRC 3956 / LMG 18251) (Lactobacillus fermentum) protein is Redox-sensing transcriptional repressor Rex.